Here is a 452-residue protein sequence, read N- to C-terminus: UDP-glycosyltransferase 76D1 (452 aa).

Residues S269, 329 to 331 (APQ), 346 to 354 (HGGWNSCLE), and 368 to 371 (SGDQ) contribute to the UDP-alpha-D-glucose site.

Belongs to the UDP-glycosyltransferase family.

Its function is as follows. Possesses low quercetin 7-O-glucosyltransferase activity in vitro. The chain is UDP-glycosyltransferase 76D1 (UGT76D1) from Arabidopsis thaliana (Mouse-ear cress).